The primary structure comprises 101 residues: uncharacterized protein (101 aa).

It is found in the mitochondrion. This is an uncharacterized protein from Arabidopsis thaliana (Mouse-ear cress).